The primary structure comprises 338 residues: Ketol-acid reductoisomerase (NADP(+)) (338 aa).

Positions 1-181 (MKVFYDKDAD…GGGRAGIIET (181 aa)) constitute a KARI N-terminal Rossmann domain. NADP(+)-binding positions include 24–27 (YGSQ), Arg47, and Ser52. His107 is an active-site residue. Gly133 serves as a coordination point for NADP(+). The KARI C-terminal knotted domain maps to 182–327 (NFREETETDL…AKLRAMMPWI (146 aa)). Residues Asp190, Glu194, Glu226, and Glu230 each coordinate Mg(2+). Ser251 lines the substrate pocket.

It belongs to the ketol-acid reductoisomerase family. Requires Mg(2+) as cofactor.

The enzyme catalyses (2R)-2,3-dihydroxy-3-methylbutanoate + NADP(+) = (2S)-2-acetolactate + NADPH + H(+). The catalysed reaction is (2R,3R)-2,3-dihydroxy-3-methylpentanoate + NADP(+) = (S)-2-ethyl-2-hydroxy-3-oxobutanoate + NADPH + H(+). It functions in the pathway amino-acid biosynthesis; L-isoleucine biosynthesis; L-isoleucine from 2-oxobutanoate: step 2/4. Its pathway is amino-acid biosynthesis; L-valine biosynthesis; L-valine from pyruvate: step 2/4. Functionally, involved in the biosynthesis of branched-chain amino acids (BCAA). Catalyzes an alkyl-migration followed by a ketol-acid reduction of (S)-2-acetolactate (S2AL) to yield (R)-2,3-dihydroxy-isovalerate. In the isomerase reaction, S2AL is rearranged via a Mg-dependent methyl migration to produce 3-hydroxy-3-methyl-2-ketobutyrate (HMKB). In the reductase reaction, this 2-ketoacid undergoes a metal-dependent reduction by NADPH to yield (R)-2,3-dihydroxy-isovalerate. The protein is Ketol-acid reductoisomerase (NADP(+)) of Cupriavidus necator (strain ATCC 17699 / DSM 428 / KCTC 22496 / NCIMB 10442 / H16 / Stanier 337) (Ralstonia eutropha).